The following is a 266-amino-acid chain: 5'-nucleotidase SurE (266 aa).

4 residues coordinate a divalent metal cation: Asp8, Asp9, Ser40, and Asn98.

It belongs to the SurE nucleotidase family. A divalent metal cation is required as a cofactor.

It localises to the cytoplasm. The catalysed reaction is a ribonucleoside 5'-phosphate + H2O = a ribonucleoside + phosphate. Nucleotidase that shows phosphatase activity on nucleoside 5'-monophosphates. This is 5'-nucleotidase SurE from Parasynechococcus marenigrum (strain WH8102).